Consider the following 939-residue polypeptide: MTESKNSFNAKSTLEVGDKSYDYFALSAVPGMEKLPYSLKVLGENLLRTEDGANITNEHIEAIANWDASSDPSIEIQFTPARVLMQDFTGVPCVVDLATMREAVAALGGDPNDVNPLNPAEMVIDHSVIVEAFGRPDALAKNVEIEYERNEERYQFLRWGSESFSNFRVVPPGTGIVHQVNIEYLARVVFDNEGLAYPDTCIGTDSHTTMENGLGILGWGVGGIEAEAAMLGQPVSMLIPRVVGFKLTGEIPVGVTATDVVLTITEMLRDHGVVQKFVEFYGSGVKAVPLANRATIGNMSPEFGSTCAMFPIDEETTKYLRLTGRPEEQVALVEAYAKAQGMWLDEDTVEAEYSEYLELDLSTVVPSIAGPKRPQDRILLSEAKEQFRKDLPTYTDDAVSVDTSIPATRMVNEGGGQPEGGVEADNYNASWAGSGESLATGAEGRPSKPVTVASPQGGEYTIDHGMVAIASITSCTNTSNPSVMIGAGLIARKAAEKGLKSKPWVKTICAPGSQVVDGYYQRADLWKDLEAMGFYLSGFGCTTCIGNSGPLPEEISAAINEHDLTATAVLSGNRNFEGRISPDVKMNYLASPIMVIAYAIAGTMDFDFENEALGQDQDGNDVFLKDIWPSTEEIEDTIQQAISRELYEADYADVFKGDKQWQELDVPTGDTFEWDENSTYIRKAPYFDGMPVEPVAVTDIQGARVLAKLGDSVTTDHISPASSIKPGTPAAQYLDEHGVERHDYNSLGSRRGNHEVMMRGTFANIRLQNQLVDIAGGYTRDFTQEGAPQAFIYDASVNYKAAGIPLVVLGGKEYGTGSSRDWAAKGTNLLGIRAVITESFERIHRSNLIGMGVVPLQFPAGESHESLGLDGTETFDITGLTALNEGETPKTVKVTATKENGDVVEFDAVVRIDTPGEADYYRHGGILQYVLRQMAASSK.

Positions 433–453 (GSGESLATGAEGRPSKPVTVA) are disordered. [4Fe-4S] cluster-binding residues include Cys475, Cys541, and Cys544.

Belongs to the aconitase/IPM isomerase family. As to quaternary structure, monomer. The cofactor is [4Fe-4S] cluster.

It carries out the reaction citrate = D-threo-isocitrate. The catalysed reaction is (2S,3R)-3-hydroxybutane-1,2,3-tricarboxylate = 2-methyl-cis-aconitate + H2O. It functions in the pathway carbohydrate metabolism; tricarboxylic acid cycle; isocitrate from oxaloacetate: step 2/2. Its pathway is organic acid metabolism; propanoate degradation. Involved in the catabolism of short chain fatty acids (SCFA) via the tricarboxylic acid (TCA)(acetyl degradation route) and probably via the 2-methylcitrate cycle I (propionate degradation route). Catalyzes the reversible isomerization of citrate to isocitrate via cis-aconitate. Could catalyze the hydration of 2-methyl-cis-aconitate to yield (2R,3S)-2-methylisocitrate. The apo form of AcnA functions as a RNA-binding regulatory protein. In Corynebacterium glutamicum (strain ATCC 13032 / DSM 20300 / JCM 1318 / BCRC 11384 / CCUG 27702 / LMG 3730 / NBRC 12168 / NCIMB 10025 / NRRL B-2784 / 534), this protein is Aconitate hydratase A (acn).